A 145-amino-acid chain; its full sequence is Superoxide dismutase [Mn/Fe] (145 aa).

The Fe(3+) site is built by H10 and H64. Mn(2+) contacts are provided by H10 and H64.

It belongs to the iron/manganese superoxide dismutase family. Mn(2+) is required as a cofactor. Fe(3+) serves as cofactor.

The catalysed reaction is 2 superoxide + 2 H(+) = H2O2 + O2. In terms of biological role, destroys superoxide anion radicals which are normally produced within the cells and which are toxic to biological systems. Catalyzes the dismutation of superoxide anion radicals into O2 and H2O2 by successive reduction and oxidation of the transition metal ion at the active site. The chain is Superoxide dismutase [Mn/Fe] (sodA) from Streptococcus salivarius.